The primary structure comprises 356 residues: UDP-N-acetylglucosamine--N-acetylmuramyl-(pentapeptide) pyrophosphoryl-undecaprenol N-acetylglucosamine transferase (356 aa).

UDP-N-acetyl-alpha-D-glucosamine-binding residues include Ser-195 and Gln-287.

The protein belongs to the glycosyltransferase 28 family. MurG subfamily.

The protein localises to the cell membrane. The catalysed reaction is Mur2Ac(oyl-L-Ala-gamma-D-Glu-L-Lys-D-Ala-D-Ala)-di-trans,octa-cis-undecaprenyl diphosphate + UDP-N-acetyl-alpha-D-glucosamine = beta-D-GlcNAc-(1-&gt;4)-Mur2Ac(oyl-L-Ala-gamma-D-Glu-L-Lys-D-Ala-D-Ala)-di-trans,octa-cis-undecaprenyl diphosphate + UDP + H(+). It participates in cell wall biogenesis; peptidoglycan biosynthesis. Functionally, cell wall formation. Catalyzes the transfer of a GlcNAc subunit on undecaprenyl-pyrophosphoryl-MurNAc-pentapeptide (lipid intermediate I) to form undecaprenyl-pyrophosphoryl-MurNAc-(pentapeptide)GlcNAc (lipid intermediate II). The sequence is that of UDP-N-acetylglucosamine--N-acetylmuramyl-(pentapeptide) pyrophosphoryl-undecaprenol N-acetylglucosamine transferase from Streptococcus gordonii (strain Challis / ATCC 35105 / BCRC 15272 / CH1 / DL1 / V288).